A 158-amino-acid chain; its full sequence is Major latex protein 22 (158 aa).

Belongs to the MLP family. In terms of tissue distribution, laticifer.

It is found in the vacuole. It localises to the cytoplasmic vesicle. Functionally, not known; MLPs constitute up to 50% of the soluble latex protein. The polypeptide is Major latex protein 22 (MLP22) (Papaver somniferum (Opium poppy)).